We begin with the raw amino-acid sequence, 544 residues long: Methionine--tRNA ligase 2 (544 aa).

The 'HIGH' region signature appears at 10 to 20 (PYANGSLHLGH). 4 residues coordinate Zn(2+): C141, C144, C153, and C156. The 'KMSKS' region motif lies at 329–333 (KLSTS). An ATP-binding site is contributed by T332.

This sequence belongs to the class-I aminoacyl-tRNA synthetase family. MetG type 1 subfamily. In terms of assembly, monomer. The cofactor is Zn(2+).

It localises to the cytoplasm. It catalyses the reaction tRNA(Met) + L-methionine + ATP = L-methionyl-tRNA(Met) + AMP + diphosphate. In terms of biological role, is required not only for elongation of protein synthesis but also for the initiation of all mRNA translation through initiator tRNA(fMet) aminoacylation. This chain is Methionine--tRNA ligase 2, found in Bacillus anthracis.